A 623-amino-acid polypeptide reads, in one-letter code: tRNA 5-methylaminomethyl-2-thiouridine biosynthesis bifunctional protein MnmC (623 aa).

A tRNA (mnm(5)s(2)U34)-methyltransferase region spans residues 1–244; that stretch reads MCVSSSIQTA…KREMLKAIWP (244 aa). Residues 268-623 are FAD-dependent cmnm(5)s(2)U34 oxidoreductase; it reads IGAGIAGLHC…VKIKKPYYSS (356 aa).

It in the N-terminal section; belongs to the methyltransferase superfamily. tRNA (mnm(5)s(2)U34)-methyltransferase family. This sequence in the C-terminal section; belongs to the DAO family. It depends on FAD as a cofactor.

The protein localises to the cytoplasm. It carries out the reaction 5-aminomethyl-2-thiouridine(34) in tRNA + S-adenosyl-L-methionine = 5-methylaminomethyl-2-thiouridine(34) in tRNA + S-adenosyl-L-homocysteine + H(+). In terms of biological role, catalyzes the last two steps in the biosynthesis of 5-methylaminomethyl-2-thiouridine (mnm(5)s(2)U) at the wobble position (U34) in tRNA. Catalyzes the FAD-dependent demodification of cmnm(5)s(2)U34 to nm(5)s(2)U34, followed by the transfer of a methyl group from S-adenosyl-L-methionine to nm(5)s(2)U34, to form mnm(5)s(2)U34. The polypeptide is tRNA 5-methylaminomethyl-2-thiouridine biosynthesis bifunctional protein MnmC (Acinetobacter baylyi (strain ATCC 33305 / BD413 / ADP1)).